A 139-amino-acid chain; its full sequence is Acidic phospholipase A2 4 (139 aa).

Positions 1–16 (MRTLWIVAVWLVGVEG) are cleaved as a signal peptide. Disulfide bonds link Cys-42-Cys-131, Cys-44-Cys-60, Cys-59-Cys-111, Cys-65-Cys-139, Cys-66-Cys-104, Cys-73-Cys-97, and Cys-91-Cys-102. 3 residues coordinate Ca(2+): Tyr-43, Gly-45, and Gly-47. His-63 is a catalytic residue. Ca(2+) is bound at residue Asp-64. Asp-105 is a catalytic residue.

Belongs to the phospholipase A2 family. Group II subfamily. D49 sub-subfamily. Requires Ca(2+) as cofactor. Expressed by the venom gland.

It is found in the secreted. The catalysed reaction is a 1,2-diacyl-sn-glycero-3-phosphocholine + H2O = a 1-acyl-sn-glycero-3-phosphocholine + a fatty acid + H(+). Its function is as follows. PLA2 catalyzes the calcium-dependent hydrolysis of the 2-acyl groups in 3-sn-phosphoglycerides. In Echis carinatus sochureki (Saw-scaled viper), this protein is Acidic phospholipase A2 4.